The primary structure comprises 129 residues: Phenazine antibiotic resistance protein EhpR (129 aa).

The VOC domain maps to 10-128 (TPNLQLVYVS…DGHIIRVCPL (119 aa)). D-alanylgriseoluteate-binding positions include 42–43 (RY) and tryptophan 57.

Homodimer.

Functionally, required for resistance to the phenazine antibiotic D-alanylgriseoluteic acid (AGA), an antibiotic produced by E.agglomerans itself, and thus protects the bacterium against phenazine toxicity. Probably binds AGA and acts as a chaperone that works in tandem with a membrane transporter for subsequent antibiotic secretion. The chain is Phenazine antibiotic resistance protein EhpR from Enterobacter agglomerans (Erwinia herbicola).